The chain runs to 487 residues: Schwannomin-interacting protein 1 (487 aa).

Disordered regions lie at residues 1 to 74, 88 to 221, 236 to 260, and 308 to 354; these read MERS…VSAL, VIDE…PVPP, FREQ…NERE, and SGSD…SLDD. The segment covering 14–27 has biased composition (basic and acidic residues); sequence DQGKHSDSDYREDG. Over residues 32-67 the composition is skewed to low complexity; it reads SDAGSSSSSSRASSQSNSTKVTPCSECKSSSSPGGS. Positions 92-106 are enriched in acidic residues; the sequence is WAPEEDGEEEEEEDE. Composition is skewed to basic and acidic residues over residues 107–123 and 153–162; these read RDQR…REPG and HQHDPQDLRH. Phosphoserine is present on serine 117. A compositionally biased stretch (polar residues) spans 242–255; that stretch reads RNQGQARTNSTSAQ. The span at 309–323 shows a compositional bias: basic and acidic residues; it reads GSDKDSDADDSKTET. A compositionally biased stretch (polar residues) spans 324–335; the sequence is SLDTPLSPMSKQ. Positions 344-354 are enriched in acidic residues; the sequence is TTEEESESLDD. Residues 424–458 are a coiled coil; the sequence is IGQLQVIVNDLHSQIESLNEELVQLLLIRDELHTE.

Belongs to the SCHIP1 family. As to quaternary structure, homooligomer (via coiled coil domain). Interacts with NF2; the interaction is direct. Interacts with ANK3. In terms of tissue distribution, preferentially expressed in brain, skeletal muscles and heart. Also expressed in detected in pancreas, kidney, liver, lung, and placenta.

It is found in the cytoplasm. This is Schwannomin-interacting protein 1 from Homo sapiens (Human).